The following is a 125-amino-acid chain: Small ribosomal subunit protein uS13 (125 aa).

Residues 95–125 (GLPVNGQRTRTNARTRKGGKKTVANKKKVTK) form a disordered region. Residues 105–125 (TNARTRKGGKKTVANKKKVTK) show a composition bias toward basic residues.

The protein belongs to the universal ribosomal protein uS13 family. Part of the 30S ribosomal subunit. Forms a loose heterodimer with protein S19. Forms two bridges to the 50S subunit in the 70S ribosome.

Its function is as follows. Located at the top of the head of the 30S subunit, it contacts several helices of the 16S rRNA. In the 70S ribosome it contacts the 23S rRNA (bridge B1a) and protein L5 of the 50S subunit (bridge B1b), connecting the 2 subunits; these bridges are implicated in subunit movement. Contacts the tRNAs in the A and P-sites. The polypeptide is Small ribosomal subunit protein uS13 (Leptospira interrogans serogroup Icterohaemorrhagiae serovar copenhageni (strain Fiocruz L1-130)).